The primary structure comprises 945 residues: Valine--tRNA ligase (945 aa).

The 'HIGH' region motif lies at 42–52 (PNVTGTLHMGH). The 'KMSKS' region signature appears at 552-556 (KMSKS). An ATP-binding site is contributed by Lys555. The stretch at 879–945 (DKAAETARLS…VQNQLAKLKD (67 aa)) forms a coiled coil.

Belongs to the class-I aminoacyl-tRNA synthetase family. ValS type 1 subfamily. Monomer.

It is found in the cytoplasm. It catalyses the reaction tRNA(Val) + L-valine + ATP = L-valyl-tRNA(Val) + AMP + diphosphate. Functionally, catalyzes the attachment of valine to tRNA(Val). As ValRS can inadvertently accommodate and process structurally similar amino acids such as threonine, to avoid such errors, it has a 'posttransfer' editing activity that hydrolyzes mischarged Thr-tRNA(Val) in a tRNA-dependent manner. In Neisseria gonorrhoeae (strain ATCC 700825 / FA 1090), this protein is Valine--tRNA ligase.